A 128-amino-acid polypeptide reads, in one-letter code: Lutropin subunit beta (128 aa).

Positions 1-20 (MERLQGLLLWLLLSPSVVWA) are cleaved as a signal peptide. Disulfide bonds link Cys-29-Cys-77, Cys-43-Cys-92, Cys-54-Cys-108, Cys-58-Cys-110, and Cys-113-Cys-120. A glycan (N-linked (GlcNAc...) asparagine) is linked at Asn-33.

Belongs to the glycoprotein hormones subunit beta family. As to quaternary structure, heterodimer of a common alpha chain and a unique beta chain which confers biological specificity to thyrotropin, lutropin, follitropin and gonadotropin.

The protein resides in the secreted. Functionally, promotes spermatogenesis and ovulation by stimulating the testes and ovaries to synthesize steroids. The sequence is that of Lutropin subunit beta (LHB) from Phodopus sungorus (Striped hairy-footed hamster).